Here is a 64-residue protein sequence, read N- to C-terminus: Large ribosomal subunit protein bL35 (64 aa).

It belongs to the bacterial ribosomal protein bL35 family.

This chain is Large ribosomal subunit protein bL35, found in Carboxydothermus hydrogenoformans (strain ATCC BAA-161 / DSM 6008 / Z-2901).